Reading from the N-terminus, the 158-residue chain is Urease accessory protein UreE (158 aa).

The tract at residues 133–158 is disordered; that stretch reads PEGGAYQAHSHDGHSHHQGHTHDHHD. Over residues 141 to 158 the composition is skewed to basic and acidic residues; sequence HSHDGHSHHQGHTHDHHD.

This sequence belongs to the UreE family.

The protein resides in the cytoplasm. Its function is as follows. Involved in urease metallocenter assembly. Binds nickel. Probably functions as a nickel donor during metallocenter assembly. This Chelativorans sp. (strain BNC1) protein is Urease accessory protein UreE.